We begin with the raw amino-acid sequence, 185 residues long: Ribosome-recycling factor (185 aa).

Belongs to the RRF family.

It localises to the cytoplasm. In terms of biological role, responsible for the release of ribosomes from messenger RNA at the termination of protein biosynthesis. May increase the efficiency of translation by recycling ribosomes from one round of translation to another. This Pelobacter propionicus (strain DSM 2379 / NBRC 103807 / OttBd1) protein is Ribosome-recycling factor.